We begin with the raw amino-acid sequence, 615 residues long: Membrane protein insertase YidC (615 aa).

5 consecutive transmembrane segments (helical) span residues 9 to 29 (LMFI…VLGP), 384 to 404 (LVGN…LVLY), 458 to 478 (LPML…TVTI), 516 to 536 (LIGA…FTMW), and 556 to 576 (WFPV…VIYW).

The protein belongs to the OXA1/ALB3/YidC family. Type 1 subfamily. Interacts with the Sec translocase complex via SecD. Specifically interacts with transmembrane segments of nascent integral membrane proteins during membrane integration.

The protein resides in the cell inner membrane. In terms of biological role, required for the insertion and/or proper folding and/or complex formation of integral membrane proteins into the membrane. Involved in integration of membrane proteins that insert both dependently and independently of the Sec translocase complex, as well as at least some lipoproteins. Aids folding of multispanning membrane proteins. The chain is Membrane protein insertase YidC from Caulobacter vibrioides (strain ATCC 19089 / CIP 103742 / CB 15) (Caulobacter crescentus).